We begin with the raw amino-acid sequence, 123 residues long: MPNITFTSPIMKKDKTIYAVAGNTATILALAKEHAIPIPFECGDGDCASCLIEVTHLDNKPAMAMMLTEKEKARLKELQMITAEEIEAAEVSDLPPRFRLACQFIPRDEDVMVHFTGTPGGSV.

One can recognise a 2Fe-2S ferredoxin-type domain in the interval 2–119 (PNITFTSPIM…DVMVHFTGTP (118 aa)). Residues Cys-42, Cys-47, Cys-50, and Cys-102 each coordinate [2Fe-2S] cluster.

This sequence belongs to the 2Fe2S plant-type ferredoxin family. Requires [2Fe-2S] cluster as cofactor.

Ferredoxins are iron-sulfur proteins that transfer electrons in a wide variety of metabolic reactions. This ferredoxin probably participates in nitrogen fixation. This is Ferredoxin-5 (fdxD) from Rhodobacter capsulatus (Rhodopseudomonas capsulata).